The primary structure comprises 421 residues: Large ribosomal subunit protein uL4 (421 aa).

Ala-2 bears the N-acetylalanine mark. An N6-acetyllysine modification is found at Lys-14. Arg-97 is subject to Omega-N-methylarginine. An N6-acetyllysine modification is found at Lys-106. Residue Lys-239 forms a Glycyl lysine isopeptide (Lys-Gly) (interchain with G-Cter in SUMO2) linkage. Lys-259 carries the post-translational modification N6-acetyllysine. Phosphothreonine is present on Thr-266. Ser-290 is subject to Phosphoserine. Arg-300 is subject to Citrulline. A Glycyl lysine isopeptide (Lys-Gly) (interchain with G-Cter in SUMO2) cross-link involves residue Lys-327. Residues Lys-333 and Lys-353 each carry the N6-acetyllysine modification. The disordered stretch occupies residues 359-421 (EAKSEEKGVP…PTTEEKKPAA (63 aa)). At Lys-361 the chain carries N6-acetyllysine; alternate. Lys-361 is covalently cross-linked (Glycyl lysine isopeptide (Lys-Gly) (interchain with G-Cter in SUMO1); alternate). At Ser-362 the chain carries Phosphoserine. Residues 368–391 (PGKKPRRKKGKKTVGVKKPKKPVV) show a composition bias toward basic residues. Basic and acidic residues predominate over residues 401 to 421 (PAADKKPAEKKPTTEEKKPAA).

The protein belongs to the universal ribosomal protein uL4 family. As to quaternary structure, component of the large ribosomal subunit. May bind IPO9 with low affinity. Interacts with RBM3. Citrullinated by PADI4.

The protein resides in the cytoplasm. Functionally, component of the large ribosomal subunit. The ribosome is a large ribonucleoprotein complex responsible for the synthesis of proteins in the cell. The polypeptide is Large ribosomal subunit protein uL4 (RPL4) (Canis lupus familiaris (Dog)).